The primary structure comprises 739 residues: Phosphoribosylformylglycinamidine synthase subunit PurL (739 aa).

Residue His54 is part of the active site. ATP is bound by residues Tyr57 and Lys96. A Mg(2+)-binding site is contributed by Glu98. Substrate is bound by residues 99–102 (SHNH) and Arg121. The active-site Proton acceptor is the His100. Mg(2+) is bound at residue Asp122. Position 245 (Gln245) interacts with substrate. Position 273 (Asp273) interacts with Mg(2+). 317–319 (ESQ) is a substrate binding site. Positions 500 and 537 each coordinate ATP. Asn538 serves as a coordination point for Mg(2+). Ser540 lines the substrate pocket.

This sequence belongs to the FGAMS family. Monomer. Part of the FGAM synthase complex composed of 1 PurL, 1 PurQ and 2 PurS subunits.

Its subcellular location is the cytoplasm. It catalyses the reaction N(2)-formyl-N(1)-(5-phospho-beta-D-ribosyl)glycinamide + L-glutamine + ATP + H2O = 2-formamido-N(1)-(5-O-phospho-beta-D-ribosyl)acetamidine + L-glutamate + ADP + phosphate + H(+). It functions in the pathway purine metabolism; IMP biosynthesis via de novo pathway; 5-amino-1-(5-phospho-D-ribosyl)imidazole from N(2)-formyl-N(1)-(5-phospho-D-ribosyl)glycinamide: step 1/2. Functionally, part of the phosphoribosylformylglycinamidine synthase complex involved in the purines biosynthetic pathway. Catalyzes the ATP-dependent conversion of formylglycinamide ribonucleotide (FGAR) and glutamine to yield formylglycinamidine ribonucleotide (FGAM) and glutamate. The FGAM synthase complex is composed of three subunits. PurQ produces an ammonia molecule by converting glutamine to glutamate. PurL transfers the ammonia molecule to FGAR to form FGAM in an ATP-dependent manner. PurS interacts with PurQ and PurL and is thought to assist in the transfer of the ammonia molecule from PurQ to PurL. This chain is Phosphoribosylformylglycinamidine synthase subunit PurL, found in Bacillus cereus (strain B4264).